The chain runs to 411 residues: Na(+)-translocating NADH-quinone reductase subunit F (411 aa).

Residues 6 to 26 form a helical membrane-spanning segment; that stretch reads AIGGVAMFTLIIMSFVAIILA. One can recognise a 2Fe-2S ferredoxin-type domain in the interval 35-129; the sequence is GDVTIHINDN…DMKIEIDPEF (95 aa). Residues C72, C78, C81, and C113 each contribute to the [2Fe-2S] cluster site. Residues 132 to 273 form the FAD-binding FR-type domain; that stretch reads VQKWECEVIS…SGPYGEFFAK (142 aa).

The protein belongs to the NqrF family. In terms of assembly, composed of six subunits; NqrA, NqrB, NqrC, NqrD, NqrE and NqrF. The cofactor is [2Fe-2S] cluster. FAD is required as a cofactor.

It localises to the cell inner membrane. The enzyme catalyses a ubiquinone + n Na(+)(in) + NADH + H(+) = a ubiquinol + n Na(+)(out) + NAD(+). Its function is as follows. NQR complex catalyzes the reduction of ubiquinone-1 to ubiquinol by two successive reactions, coupled with the transport of Na(+) ions from the cytoplasm to the periplasm. The first step is catalyzed by NqrF, which accepts electrons from NADH and reduces ubiquinone-1 to ubisemiquinone by a one-electron transfer pathway. This chain is Na(+)-translocating NADH-quinone reductase subunit F, found in Psychrobacter arcticus (strain DSM 17307 / VKM B-2377 / 273-4).